Reading from the N-terminus, the 81-residue chain is MNDAFSTAQHRLDALGLRCPEPVMMVRKTVRQMAAGETLLIIADDPATTRDIPSFCEFMDHTLIASETTQTPYHYLIKKGL.

Catalysis depends on Cys19, which acts as the Cysteine persulfide intermediate.

It belongs to the sulfur carrier protein TusA family.

It is found in the cytoplasm. Functionally, sulfur carrier protein which probably makes part of a sulfur-relay system. In Shewanella baltica (strain OS185), this protein is Sulfur carrier protein TusA.